A 492-amino-acid chain; its full sequence is GTPase Der (492 aa).

EngA-type G domains lie at 3 to 167 (FTLA…EKFE) and 207 to 382 (LQVA…DVWN). Residues 9-16 (GRPNVGKS), 56-60 (DSAGL), 119-122 (NKSE), 213-220 (GRPNAGKS), 260-264 (DTAGM), and 325-328 (NKWD) contribute to the GTP site. Residues 383 to 469 (RRVPTAALNR…RLTLRGQGDK (87 aa)) form the KH-like domain. Residues 461–492 (LTLRGQGDKNPYKGKKKSTPSRLRKHLEGRKS) form a disordered region. The segment covering 472–492 (YKGKKKSTPSRLRKHLEGRKS) has biased composition (basic residues).

This sequence belongs to the TRAFAC class TrmE-Era-EngA-EngB-Septin-like GTPase superfamily. EngA (Der) GTPase family. In terms of assembly, associates with the 50S ribosomal subunit.

Functionally, GTPase that plays an essential role in the late steps of ribosome biogenesis. This chain is GTPase Der, found in Ruegeria sp. (strain TM1040) (Silicibacter sp.).